We begin with the raw amino-acid sequence, 137 residues long: Small ribosomal subunit protein eS17 (137 aa).

This sequence belongs to the eukaryotic ribosomal protein eS17 family. Component of the small ribosomal subunit. Mature ribosomes consist of a small (40S) and a large (60S) subunit. The 40S subunit contains about 32 different proteins and 1 molecule of RNA (18S). The 60S subunit contains 45 different proteins and 3 molecules of RNA (25S, 5.8S and 5S).

The protein resides in the cytoplasm. Functionally, component of the ribosome, a large ribonucleoprotein complex responsible for the synthesis of proteins in the cell. The small ribosomal subunit (SSU) binds messenger RNAs (mRNAs) and translates the encoded message by selecting cognate aminoacyl-transfer RNA (tRNA) molecules. The large subunit (LSU) contains the ribosomal catalytic site termed the peptidyl transferase center (PTC), which catalyzes the formation of peptide bonds, thereby polymerizing the amino acids delivered by tRNAs into a polypeptide chain. The nascent polypeptides leave the ribosome through a tunnel in the LSU and interact with protein factors that function in enzymatic processing, targeting, and the membrane insertion of nascent chains at the exit of the ribosomal tunnel. This Candida albicans (strain SC5314 / ATCC MYA-2876) (Yeast) protein is Small ribosomal subunit protein eS17 (RPS17B).